The primary structure comprises 224 residues: 7-cyano-7-deazaguanine synthase (224 aa).

An ATP-binding site is contributed by 11–21; it reads FSGGQDSTTCL. C190, C199, C202, and C205 together coordinate Zn(2+).

This sequence belongs to the QueC family. It depends on Zn(2+) as a cofactor.

It catalyses the reaction 7-carboxy-7-deazaguanine + NH4(+) + ATP = 7-cyano-7-deazaguanine + ADP + phosphate + H2O + H(+). Its pathway is purine metabolism; 7-cyano-7-deazaguanine biosynthesis. Catalyzes the ATP-dependent conversion of 7-carboxy-7-deazaguanine (CDG) to 7-cyano-7-deazaguanine (preQ(0)). The chain is 7-cyano-7-deazaguanine synthase from Parabacteroides distasonis (strain ATCC 8503 / DSM 20701 / CIP 104284 / JCM 5825 / NCTC 11152).